The following is a 392-amino-acid chain: Chloramphenicol resistance protein (392 aa).

Helical transmembrane passes span 6-26, 42-62, 71-91, 100-120, 129-149, 160-180, 205-225, 239-259, 268-288, 294-314, 332-352, and 358-378; these read YLLA…AGLV, TLTS…AALA, LLGF…TTSF, VAAL…AALV, LAVL…GGSL, FWAV…AIPA, LLLA…SFTF, LWIS…VTVA, AQVL…LAML, ALLT…STLI, ATAA…TTLG, and LGPL…AFPF.

It belongs to the major facilitator superfamily.

Its subcellular location is the cell membrane. The polypeptide is Chloramphenicol resistance protein (cmlR) (Streptomyces lividans).